Consider the following 72-residue polypeptide: Alpha-elapitoxin-Ast2b (72 aa).

Cystine bridges form between Cys3-Cys20, Cys13-Cys41, Cys26-Cys30, Cys45-Cys56, and Cys57-Cys62. Arginine amide is present on Arg72.

This sequence belongs to the three-finger toxin family. Long-chain subfamily. Type II alpha-neurotoxin sub-subfamily. Expressed by the venom gland.

The protein localises to the secreted. Functionally, binds with high affinity to muscular (alpha-1/CHRNA1) and neuronal (alpha-7/CHRNA7) nicotinic acetylcholine receptor (nAChR) and inhibits acetylcholine from binding to the receptor, thereby impairing neuromuscular and neuronal transmission. In Hydrophis stokesii (Stokes's sea snake), this protein is Alpha-elapitoxin-Ast2b.